We begin with the raw amino-acid sequence, 292 residues long: Sulfofructosephosphate aldolase (292 aa).

The active-site Schiff-base intermediate with substrate is Lys-193.

This sequence belongs to the aldolase LacD family. Homotetramer.

It catalyses the reaction 6-deoxy-6-sulfo-D-fructose 1-phosphate = (2S)-3-sulfolactaldehyde + dihydroxyacetone phosphate. Its function is as follows. Cleaves 6-deoxy-6-sulfo-D-fructose 1-phosphate (SFP) to form dihydroxyacetone phosphate (DHAP) and 3-sulfolactaldehyde (SLA). This Salmonella typhi protein is Sulfofructosephosphate aldolase (yihT).